Reading from the N-terminus, the 188-residue chain is MGERIKSTMDLLIYLQNSHLATGFGFNTNLFETNLINLAVVIGVLVYFGKGVLTTLLNNRKETIVNTIRDAEERYQEATEKLNKAYTRLEQAKAKAEEIRVNGLAQMEIEKQELIKAADEDSKRLEDSKNATLRFEEQRAIEQVRQQVSRLALELALETLKTRLNRDLHAQMIDYHIGLLQSMESVID.

A helical transmembrane segment spans residues L35–L57.

This sequence belongs to the ATPase B chain family. As to quaternary structure, F-type ATPases have 2 components, F(1) - the catalytic core - and F(0) - the membrane proton channel. F(1) has five subunits: alpha(3), beta(3), gamma(1), delta(1), epsilon(1). F(0) has four main subunits: a(1), b(1), b'(1) and c(10-14). The alpha and beta chains form an alternating ring which encloses part of the gamma chain. F(1) is attached to F(0) by a central stalk formed by the gamma and epsilon chains, while a peripheral stalk is formed by the delta, b and b' chains.

Its subcellular location is the plastid. It is found in the chloroplast thylakoid membrane. Its function is as follows. F(1)F(0) ATP synthase produces ATP from ADP in the presence of a proton or sodium gradient. F-type ATPases consist of two structural domains, F(1) containing the extramembraneous catalytic core and F(0) containing the membrane proton channel, linked together by a central stalk and a peripheral stalk. During catalysis, ATP synthesis in the catalytic domain of F(1) is coupled via a rotary mechanism of the central stalk subunits to proton translocation. In terms of biological role, component of the F(0) channel, it forms part of the peripheral stalk, linking F(1) to F(0). This Zygnema circumcarinatum (Green alga) protein is ATP synthase subunit b, chloroplastic.